A 347-amino-acid chain; its full sequence is Methylthioribose-1-phosphate isomerase (347 aa).

Residues 45-47 (RGA), Arg-88, and Gln-197 each bind substrate. Residue Asp-238 is the Proton donor of the active site. Position 248–249 (248–249 (NK)) interacts with substrate.

This sequence belongs to the eIF-2B alpha/beta/delta subunits family. MtnA subfamily.

It catalyses the reaction 5-(methylsulfanyl)-alpha-D-ribose 1-phosphate = 5-(methylsulfanyl)-D-ribulose 1-phosphate. Its pathway is amino-acid biosynthesis; L-methionine biosynthesis via salvage pathway; L-methionine from S-methyl-5-thio-alpha-D-ribose 1-phosphate: step 1/6. In terms of biological role, catalyzes the interconversion of methylthioribose-1-phosphate (MTR-1-P) into methylthioribulose-1-phosphate (MTRu-1-P). This chain is Methylthioribose-1-phosphate isomerase, found in Nostoc sp. (strain PCC 7120 / SAG 25.82 / UTEX 2576).